The primary structure comprises 80 residues: Gamma-conotoxin-like Am6.6 (80 aa).

The signal sequence occupies residues 1-19 (MEKLTILLLVAAILMSTQA). The propeptide occupies 20–45 (LNQEQRQQAKINLLSKKKPSAERWRR). Disulfide bonds link C47-C61, C54-C65, and C60-C70. E56 and E59 each carry 4-carboxyglutamate. 4-carboxyglutamate is present on E71. P76 carries the 4-hydroxyproline modification. Residues 78–80 (RAI) constitute a propeptide that is removed on maturation.

It belongs to the conotoxin O2 family. As to expression, expressed by the venom duct.

It localises to the secreted. Gamma-conotoxins may act on voltage-gated non-specific cation pacemaker channels (HCN). The protein is Gamma-conotoxin-like Am6.6 of Conus amadis (Amadis cone).